The primary structure comprises 458 residues: tRNA-2-methylthio-N(6)-dimethylallyladenosine synthase (458 aa).

The MTTase N-terminal domain occupies 15–134 (KKVFIKTYGC…LPELLEKAKQ (120 aa)). Positions 24, 60, 97, 175, 179, and 182 each coordinate [4Fe-4S] cluster. In terms of domain architecture, Radical SAM core spans 161–395 (RKRGVSAFLT…LLLEQQNTFL (235 aa)). In terms of domain architecture, TRAM spans 396 to 457 (RSKIGQKTDV…SNSFVGEMTN (62 aa)).

This sequence belongs to the methylthiotransferase family. MiaB subfamily. Monomer. It depends on [4Fe-4S] cluster as a cofactor.

The protein localises to the cytoplasm. The enzyme catalyses N(6)-dimethylallyladenosine(37) in tRNA + (sulfur carrier)-SH + AH2 + 2 S-adenosyl-L-methionine = 2-methylsulfanyl-N(6)-dimethylallyladenosine(37) in tRNA + (sulfur carrier)-H + 5'-deoxyadenosine + L-methionine + A + S-adenosyl-L-homocysteine + 2 H(+). Its function is as follows. Catalyzes the methylthiolation of N6-(dimethylallyl)adenosine (i(6)A), leading to the formation of 2-methylthio-N6-(dimethylallyl)adenosine (ms(2)i(6)A) at position 37 in tRNAs that read codons beginning with uridine. The chain is tRNA-2-methylthio-N(6)-dimethylallyladenosine synthase from Bartonella tribocorum (strain CIP 105476 / IBS 506).